The following is a 326-amino-acid chain: MCTASPCDLEEIPLDDEDSDSLEFKILEFYVKHHVFQNTSAILSPKHLRTRSLSQKGPERWPVSEAWTQGPWPCRHSQSSEKAINLTKKKSSWRTLFGVAEKEEDSQSSPPEICAQAQRSGVPQARPRSPKWPRSRSSMDQRLEHKAADPRVVSIANRVAEIVYSWPPPEEVHSQGGGFKSKGVLVFQGPQGQSGAESTKKEGEDQIIARIVELLKYSGEQLERELKKDKVLMTCFQDVLSYSVVKTITDQFLRGVDTRGESEVKAQSFKAALAIDVIAKLTTIDNHPMNRVLGFGTKYLKENFSPWIQQHGGWEKILRMPHEEVD.

At Ser44 the chain carries Phosphoserine. Residues 100 to 147 form a disordered region; sequence AEKEEDSQSSPPEICAQAQRSGVPQARPRSPKWPRSRSSMDQRLEHKA. Basic and acidic residues predominate over residues 137–147; it reads SSMDQRLEHKA. The BH3 motif lies at 211-225; sequence IVELLKYSGEQLERE. A BH2 motif is present at residues 307 to 314; it reads WIQQHGGW.

The protein belongs to the Bcl-2 family. In terms of processing, phosphorylated by MELK, leading to inhibit its pro-apoptotic function.

It localises to the cytoplasm. Its function is as follows. Plays a role in apoptosis. The protein is Apoptosis facilitator Bcl-2-like protein 14 (BCL2L14) of Bos taurus (Bovine).